The sequence spans 147 residues: uncharacterized protein (147 aa).

This is an uncharacterized protein from Escherichia coli.